A 288-amino-acid chain; its full sequence is 4-diphosphocytidyl-2-C-methyl-D-erythritol kinase (288 aa).

Residue Lys-8 is part of the active site. 92 to 102 (PVAAGMAGGST) is a binding site for ATP. Residue Asp-134 is part of the active site.

The protein belongs to the GHMP kinase family. IspE subfamily.

The enzyme catalyses 4-CDP-2-C-methyl-D-erythritol + ATP = 4-CDP-2-C-methyl-D-erythritol 2-phosphate + ADP + H(+). It participates in isoprenoid biosynthesis; isopentenyl diphosphate biosynthesis via DXP pathway; isopentenyl diphosphate from 1-deoxy-D-xylulose 5-phosphate: step 3/6. Functionally, catalyzes the phosphorylation of the position 2 hydroxy group of 4-diphosphocytidyl-2C-methyl-D-erythritol. The sequence is that of 4-diphosphocytidyl-2-C-methyl-D-erythritol kinase from Clostridium perfringens (strain 13 / Type A).